The following is an 878-amino-acid chain: uncharacterized protein (878 aa).

4 disordered regions span residues 58–223 (IGVD…RTKF), 306–494 (KGRL…TSSR), 585–652 (KLLE…SGKL), and 679–709 (PSSMVTIPSPSSSCSSTSSIIGSSSSSGGGG). Composition is skewed to low complexity over residues 64–213 (NGNS…SGTS), 314–325 (SNSSQSSDSDYS), and 335–355 (IPNSTLSSSSTLPIPSNPNSN). Over residues 362–372 (RNPNQLSSTNV) the composition is skewed to polar residues. Positions 373–494 (NNNINNSGGS…TPTTPVTSSR (122 aa)) are enriched in low complexity. Positions 585 to 595 (KLLEQQKEQQQ) are enriched in basic and acidic residues. A compositionally biased stretch (low complexity) spans 596-605 (KEQQQQQKQQ). A compositionally biased stretch (acidic residues) spans 615-624 (TDDEDEDDDE). Low complexity-rich tracts occupy residues 639–652 (NLSNNSSNKGSGKL) and 679–704 (PSSMVTIPSPSSSCSSTSSIIGSSSS).

This is an uncharacterized protein from Dictyostelium discoideum (Social amoeba).